A 540-amino-acid polypeptide reads, in one-letter code: Phosphoenolpyruvate carboxykinase (ATP) (540 aa).

Residue arginine 65 coordinates substrate. Lysine 87 carries the N6-acetyllysine modification. Substrate contacts are provided by tyrosine 207 and lysine 213. Residues lysine 213, histidine 232, and 248–256 (GLSGTGKTT) each bind ATP. Mn(2+) is bound by residues lysine 213 and histidine 232. Aspartate 269 lines the Mn(2+) pocket. ATP-binding positions include glutamate 297, arginine 333, 449 to 450 (RI), and threonine 455. Arginine 333 contributes to the substrate binding site. The residue at position 523 (lysine 523) is an N6-acetyllysine.

It belongs to the phosphoenolpyruvate carboxykinase (ATP) family. Monomer. Requires Mn(2+) as cofactor.

The protein resides in the cytoplasm. The catalysed reaction is oxaloacetate + ATP = phosphoenolpyruvate + ADP + CO2. Its pathway is carbohydrate biosynthesis; gluconeogenesis. In terms of biological role, involved in the gluconeogenesis. Catalyzes the conversion of oxaloacetate (OAA) to phosphoenolpyruvate (PEP) through direct phosphoryl transfer between the nucleoside triphosphate and OAA. This Shigella flexneri protein is Phosphoenolpyruvate carboxykinase (ATP).